We begin with the raw amino-acid sequence, 170 residues long: Bifunctional protein PyrR (170 aa).

The PRPP-binding motif lies at 90-102 (LVLIDDVLMSGRT).

It belongs to the purine/pyrimidine phosphoribosyltransferase family. PyrR subfamily.

It carries out the reaction UMP + diphosphate = 5-phospho-alpha-D-ribose 1-diphosphate + uracil. In terms of biological role, regulates the transcription of the pyrimidine nucleotide (pyr) operon in response to exogenous pyrimidines. Also displays a weak uracil phosphoribosyltransferase activity which is not physiologically significant. In Pseudomonas syringae pv. syringae (strain B728a), this protein is Bifunctional protein PyrR.